Consider the following 207-residue polypeptide: MFIVIEGCEGSGKSSLTELLKNRLITEGKSVIATREPGGSPLGEQVRNWILNPSLPGISPYTELFLFLASRAQHITEKIIPALESGKIVICDRFHDSTIVYQGIAEGLGKEYVTNLCHHVVGEKKFLPDLTCLLDIPVDTGIKRKQQQKSLDKFEDKPLVYHNKIREGFLSLAEANPENYLILDGRQPLEASLNKVMTAYTELALCK.

Residue 7-14 coordinates ATP; that stretch reads GCEGSGKS.

Belongs to the thymidylate kinase family.

The catalysed reaction is dTMP + ATP = dTDP + ADP. Its function is as follows. Phosphorylation of dTMP to form dTDP in both de novo and salvage pathways of dTTP synthesis. This is Thymidylate kinase from Chlamydia felis (strain Fe/C-56) (Chlamydophila felis).